A 417-amino-acid polypeptide reads, in one-letter code: NADH-quinone oxidoreductase subunit D (417 aa).

Belongs to the complex I 49 kDa subunit family. NDH-1 is composed of 14 different subunits. Subunits NuoB, C, D, E, F, and G constitute the peripheral sector of the complex.

It is found in the cell membrane. It catalyses the reaction a quinone + NADH + 5 H(+)(in) = a quinol + NAD(+) + 4 H(+)(out). NDH-1 shuttles electrons from NADH, via FMN and iron-sulfur (Fe-S) centers, to quinones in the respiratory chain. The immediate electron acceptor for the enzyme in this species is believed to be ubiquinone. Couples the redox reaction to proton translocation (for every two electrons transferred, four hydrogen ions are translocated across the cytoplasmic membrane), and thus conserves the redox energy in a proton gradient. The protein is NADH-quinone oxidoreductase subunit D of Polynucleobacter asymbioticus (strain DSM 18221 / CIP 109841 / QLW-P1DMWA-1) (Polynucleobacter necessarius subsp. asymbioticus).